The sequence spans 103 residues: Large ribosomal subunit protein bL21 (103 aa).

Belongs to the bacterial ribosomal protein bL21 family. As to quaternary structure, part of the 50S ribosomal subunit. Contacts protein L20.

Its function is as follows. This protein binds to 23S rRNA in the presence of protein L20. This is Large ribosomal subunit protein bL21 from Aromatoleum aromaticum (strain DSM 19018 / LMG 30748 / EbN1) (Azoarcus sp. (strain EbN1)).